The sequence spans 179 residues: Viral interleukin-10 homolog (179 aa).

The first 18 residues, 1-18, serve as a signal peptide directing secretion; sequence MFRASLLCCLVLLAGVWA. 2 disulfide bridges follow: Cys-30/Cys-127 and Cys-80/Cys-133. Asn-100 and Asn-135 each carry an N-linked (GlcNAc...) asparagine; by host glycan.

The protein belongs to the IL-10 family.

It is found in the secreted. Down-regulates the expression of the TAP1 gene (transporter associated with antigen processing), thereby affecting the transport of peptides into the endoplasmic reticulum and subsequent peptide loading by MHC class I molecules. In consequence, infected cells are masked for immune recognition by cytotoxic T-lymphocytes. The chain is Viral interleukin-10 homolog from Equus caballus (Horse).